Here is a 331-residue protein sequence, read N- to C-terminus: UDP-xylose and UDP-N-acetylglucosamine transporter (331 aa).

10 helical membrane passes run 5–25 (FAVT…ELLV), 30–50 (GCGN…GFIF), 59–79 (PQIP…VSVI), 92–112 (LHMI…IIIL), 122–142 (LSIV…AKQV), 153–173 (GVYA…ALLM), 201–221 (CLPL…AVLF), 238–260 (VMWF…VFIL), 267–289 (LTVT…LYFQ), and 301–321 (AVVF…PAAF).

This sequence belongs to the nucleotide-sugar transporter family. SLC35B subfamily.

It is found in the golgi apparatus membrane. Sugar transporter that specifically mediates the transport of UDP-xylose (UDP-Xyl) and UDP-N-acetylglucosamine (UDP-GlcNAc) from cytosol into Golgi. In Danio rerio (Zebrafish), this protein is UDP-xylose and UDP-N-acetylglucosamine transporter (slc35b4).